We begin with the raw amino-acid sequence, 318 residues long: Extracellular metalloprotease AO090012001025 (318 aa).

An N-terminal signal peptide occupies residues 1–23; sequence MSHFPTLHILILVIANLQIQCFA. Asn-106, Asn-121, and Asn-193 each carry an N-linked (GlcNAc...) asparagine glycan. A Zn(2+)-binding site is contributed by His-229. The active site involves Glu-230. Residue His-233 coordinates Zn(2+). Cys-268 and Cys-295 form a disulfide bridge.

The protein belongs to the peptidase M43B family.

The protein resides in the secreted. In terms of biological role, secreted metalloproteinase that allows assimilation of proteinaceous substrates. The chain is Extracellular metalloprotease AO090012001025 from Aspergillus oryzae (strain ATCC 42149 / RIB 40) (Yellow koji mold).